Reading from the N-terminus, the 239-residue chain is Sugar fermentation stimulation protein homolog (239 aa).

This sequence belongs to the SfsA family.

The chain is Sugar fermentation stimulation protein homolog from Caulobacter vibrioides (strain ATCC 19089 / CIP 103742 / CB 15) (Caulobacter crescentus).